A 413-amino-acid polypeptide reads, in one-letter code: Multifunctional CCA protein (413 aa).

ATP is bound by residues Gly-8 and Arg-11. The CTP site is built by Gly-8 and Arg-11. The Mg(2+) site is built by Asp-21 and Asp-23. 3 residues coordinate ATP: Arg-91, Arg-143, and Arg-146. The CTP site is built by Arg-91, Arg-143, and Arg-146. In terms of domain architecture, HD spans 232 to 333 (TGVHVMMVVD…VRLFERSDAL (102 aa)).

The protein belongs to the tRNA nucleotidyltransferase/poly(A) polymerase family. Bacterial CCA-adding enzyme type 1 subfamily. As to quaternary structure, monomer. Can also form homodimers and oligomers. Requires Mg(2+) as cofactor. The cofactor is Ni(2+).

The catalysed reaction is a tRNA precursor + 2 CTP + ATP = a tRNA with a 3' CCA end + 3 diphosphate. It catalyses the reaction a tRNA with a 3' CCA end + 2 CTP + ATP = a tRNA with a 3' CCACCA end + 3 diphosphate. Catalyzes the addition and repair of the essential 3'-terminal CCA sequence in tRNAs without using a nucleic acid template. Adds these three nucleotides in the order of C, C, and A to the tRNA nucleotide-73, using CTP and ATP as substrates and producing inorganic pyrophosphate. tRNA 3'-terminal CCA addition is required both for tRNA processing and repair. Also involved in tRNA surveillance by mediating tandem CCA addition to generate a CCACCA at the 3' terminus of unstable tRNAs. While stable tRNAs receive only 3'-terminal CCA, unstable tRNAs are marked with CCACCA and rapidly degraded. The chain is Multifunctional CCA protein from Burkholderia lata (strain ATCC 17760 / DSM 23089 / LMG 22485 / NCIMB 9086 / R18194 / 383).